Reading from the N-terminus, the 123-residue chain is Kininogen (123 aa).

Post-translationally, bradykinin is released from kininogen by kallikrein. N-glycosylated. Contains sulfated N-acetylglucosamine and O-acetylated sialic acids as terminal elements on biantennary and triantennary N-glycans.

Its function is as follows. Inhibits papain and ficin (cysteine proteinases) but not trypsin (a serine proteinase). The polypeptide is Kininogen (Gadus morhua (Atlantic cod)).